The primary structure comprises 476 residues: Siroheme synthase (476 aa).

The segment at 1–207 is precorrin-2 dehydrogenase /sirohydrochlorin ferrochelatase; that stretch reads MTANVLFPLF…QRHAEAEAVL (207 aa). NAD(+) contacts are provided by residues 25–26 and 46–47; these read KV and PS. Phosphoserine is present on serine 132. The interval 220-476 is uroporphyrinogen-III C-methyltransferase; that stretch reads GSVTLVGAGA…SAPCPPALIL (257 aa). Aspartate 252 (proton acceptor) is an active-site residue. Lysine 274 (proton donor) is an active-site residue. Residues 305 to 307, valine 310, 335 to 336, methionine 387, and glycine 416 contribute to the S-adenosyl-L-methionine site; these read GGD and TA.

It in the N-terminal section; belongs to the precorrin-2 dehydrogenase / sirohydrochlorin ferrochelatase family. The protein in the C-terminal section; belongs to the precorrin methyltransferase family.

The catalysed reaction is uroporphyrinogen III + 2 S-adenosyl-L-methionine = precorrin-2 + 2 S-adenosyl-L-homocysteine + H(+). It catalyses the reaction precorrin-2 + NAD(+) = sirohydrochlorin + NADH + 2 H(+). It carries out the reaction siroheme + 2 H(+) = sirohydrochlorin + Fe(2+). It functions in the pathway cofactor biosynthesis; adenosylcobalamin biosynthesis; precorrin-2 from uroporphyrinogen III: step 1/1. The protein operates within cofactor biosynthesis; adenosylcobalamin biosynthesis; sirohydrochlorin from precorrin-2: step 1/1. Its pathway is porphyrin-containing compound metabolism; siroheme biosynthesis; precorrin-2 from uroporphyrinogen III: step 1/1. It participates in porphyrin-containing compound metabolism; siroheme biosynthesis; siroheme from sirohydrochlorin: step 1/1. It functions in the pathway porphyrin-containing compound metabolism; siroheme biosynthesis; sirohydrochlorin from precorrin-2: step 1/1. Its function is as follows. Multifunctional enzyme that catalyzes the SAM-dependent methylations of uroporphyrinogen III at position C-2 and C-7 to form precorrin-2 via precorrin-1. Then it catalyzes the NAD-dependent ring dehydrogenation of precorrin-2 to yield sirohydrochlorin. Finally, it catalyzes the ferrochelation of sirohydrochlorin to yield siroheme. The polypeptide is Siroheme synthase (Xylella fastidiosa (strain 9a5c)).